A 1549-amino-acid polypeptide reads, in one-letter code: Trichohyalin (1549 aa).

Residues 1–91 (MSPLLRSIFN…AAACYYALGQ (91 aa)) form an S-100-like region. EF-hand domains follow at residues 23–48 (CDGT…LRKP) and 49–84 (HDPE…VAAA). The Ca(2+) site is built by T27, D32, D62, D64, D66, and E73. Disordered stretches follow at residues 97 to 125 (EKEA…PQDR), 157 to 180 (LQRR…GREL), 262 to 359 (LRRK…KQEQ), and 404 to 448 (QREK…RQER). 3 stretches are compositionally biased toward basic and acidic residues: residues 171 to 180 (LQQRPKGREL), 262 to 278 (LRRK…RQEQ), and 317 to 335 (HRQE…ERQQ). Residues 336–348 (EQQISEEVQSLQE) show a composition bias toward low complexity. Residues 349–359 (DQGRQRLKQEQ) are compositionally biased toward basic and acidic residues. Tandem repeats lie at residues 413-448 (ERQY…RQER), 449-476 (EKQY…RQER), 477-504 (EKQY…RQER), 505-532 (ERQY…RQER), 533-560 (ERQY…RQER), 561-588 (EKQY…RQER), 589-616 (EKQY…RQER), 617-644 (ERQY…RQER), 645-678 (ERQY…RQER), 679-706 (ERQY…RQER), 707-742 (ERQY…RQVR), 743-771 (ERKY…DREK), 772-796 (RQYL…RQER), and 797-832 (ERQY…RQEL). Residues 413–832 (ERQYREVELQ…ECEKRRRQEL (420 aa)) are 14 X 28 AA approximate tandem repeats. Disordered stretches follow at residues 782-803 (REEE…YREE), 839-942 (EELQ…RKFR), and 980-1000 (QLRQ…ERDR). Composition is skewed to basic and acidic residues over residues 850-884 (FRDD…DSWV), 895-918 (PLQD…KRDS), and 925-942 (LLER…RKFR). A run of 23 repeats spans residues 938-961 (DRKF…YLEE), 962-985 (DRKF…RQER), 986-1021 (DRKF…RQER), 1022-1044 (DRKF…RQER), 1045-1067 (DRKF…RQER), 1068-1090 (DRKF…LRQE), 1091-1121 (RNRK…RQKR), 1122-1144 (DRKF…RQER), 1145-1167 (DRKF…RQER), 1168-1197 (DRKF…RQER), 1198-1227 (DRKF…RQER), 1228-1250 (DRKF…RQER), 1251-1273 (DRKF…RQER), 1274-1296 (DRKF…RQER), 1297-1319 (DRKF…RQER), 1320-1342 (DRKF…RQER), 1343-1368 (DRKF…ELEG), 1369-1391 (VFSQ…QRQR), 1392-1416 (DRKF…VQEQ), 1417-1439 (DRKF…RRRQ), 1440-1461 (QLDQ…RRQE), 1462-1484 (QELR…EEEQ), and 1485-1507 (LRRQ…SRRQ). The segment at 938 to 1507 (DRKFREEEQL…ERDVQQSRRQ (570 aa)) is 23 X 23 AA approximate tandem repeats. The segment covering 1489–1523 (QQEEQKRRQERDVQQSRRQVWEEDKGRRQVLEAGK) has biased composition (basic and acidic residues). Residues 1489 to 1549 (QQEEQKRRQE…IQEQRSQYRP (61 aa)) are disordered.

It belongs to the S100-fused protein family. Homodimer. Substrate of transglutaminase. Some 200 arginines are probably converted to citrullines by peptidylarginine deimidase. As to expression, found in the hard keratinizing tissues such as the inner root sheath (IRS) of hair follicles and medulla, and in the epithelia of the tongue, hoof and rumen.

In terms of biological role, intermediate filament-associated protein that associates in regular arrays with keratin intermediate filaments (KIF) of the inner root sheath cells of the hair follicle and the granular layer of the epidermis. It later becomes cross-linked to KIF by isodipeptide bonds. It may serve as scaffold protein, together with involucrin, in the organization of the cell envelope or even anchor the cell envelope to the KIF network. It may be involved in its own calcium-dependent postsynthetic processing during terminal differentiation. The polypeptide is Trichohyalin (TCHH) (Ovis aries (Sheep)).